We begin with the raw amino-acid sequence, 638 residues long: Threonine--tRNA ligase (638 aa).

The TGS domain maps to 1 to 61; it reads MPVITLPDGS…SVDGKLQIIT (61 aa). The tract at residues 243 to 534 is catalytic; sequence DHRKIGKTQD…LTEEYAGFFP (292 aa). 3 residues coordinate Zn(2+): cysteine 334, histidine 385, and histidine 511.

Belongs to the class-II aminoacyl-tRNA synthetase family. As to quaternary structure, homodimer. Zn(2+) is required as a cofactor.

The protein localises to the cytoplasm. It carries out the reaction tRNA(Thr) + L-threonine + ATP = L-threonyl-tRNA(Thr) + AMP + diphosphate + H(+). Its function is as follows. Catalyzes the attachment of threonine to tRNA(Thr) in a two-step reaction: L-threonine is first activated by ATP to form Thr-AMP and then transferred to the acceptor end of tRNA(Thr). Also edits incorrectly charged L-seryl-tRNA(Thr). The protein is Threonine--tRNA ligase of Hamiltonella defensa subsp. Acyrthosiphon pisum (strain 5AT).